The chain runs to 265 residues: V0 assembly protein 1 (265 aa).

The N-terminal stretch at 1-24 is a signal peptide; sequence MVFGQLYALFIFTLSCCISKTVQA. The Vacuolar segment spans residues 25 to 223; that stretch reads DSSKESSSFI…ILSSIWTEGL (199 aa). Residues N69, N104, and N172 are each glycosylated (N-linked (GlcNAc...) asparagine). A helical membrane pass occupies residues 224–244; it reads LMCLIVSALLLFILIVALSWI. Topologically, residues 245–265 are cytoplasmic; it reads SNLDITYGALEKSTNPIKKNN. The ER retention motif motif lies at 262–265; that stretch reads KKNN.

It belongs to the VOA1 family. V-ATPase is a heteromultimeric enzyme composed of a peripheral catalytic V1 complex (components A to H) attached to an integral membrane V0 proton pore complex (components: a, c, c', c'', d, e, f and VOA1). Interacts with VMA21. Associates with the assembling V0 complex.

The protein resides in the vacuole membrane. Its subcellular location is the endoplasmic reticulum membrane. Accessory component of the V0 complex of vacuolar(H+)-ATPase (V-ATPase), a multisubunit enzyme composed of a peripheral complex (V1) that hydrolyzes ATP and a membrane integral complex (V0) that translocates protons. V-ATPase is responsible for acidifying and maintaining the pH of intracellular compartments. Functions with VMA21 in assembly of the V0 complex. The chain is V0 assembly protein 1 (VOA1) from Saccharomyces cerevisiae (strain ATCC 204508 / S288c) (Baker's yeast).